The sequence spans 204 residues: Urease accessory protein UreG (204 aa).

11–18 (GPVGAGKT) is a GTP binding site.

It belongs to the SIMIBI class G3E GTPase family. UreG subfamily. In terms of assembly, homodimer. UreD, UreF and UreG form a complex that acts as a GTP-hydrolysis-dependent molecular chaperone, activating the urease apoprotein by helping to assemble the nickel containing metallocenter of UreC. The UreE protein probably delivers the nickel.

It localises to the cytoplasm. In terms of biological role, facilitates the functional incorporation of the urease nickel metallocenter. This process requires GTP hydrolysis, probably effectuated by UreG. In Staphylococcus aureus (strain MSSA476), this protein is Urease accessory protein UreG.